The primary structure comprises 213 residues: Adenylate kinase (213 aa).

14–19 (GSGKGT) provides a ligand contact to ATP. The tract at residues 34–63 (SSGELFRSAIDSASPLGIKAAEYINQGLLV) is NMP. Residues S35, R40, 61–63 (LLV), 89–92 (GFPR), and Q96 contribute to the AMP site. Residues 129-162 (SRFICPSCKHVYNQNQGLSECPTCQMKLVRRSDD) are LID. Residue R130 coordinates ATP. Residues C133 and C136 each contribute to the Zn(2+) site. 139-140 (VY) provides a ligand contact to ATP. 2 residues coordinate Zn(2+): C149 and C152. Residues R159 and R170 each coordinate AMP. A198 lines the ATP pocket.

It belongs to the adenylate kinase family. As to quaternary structure, monomer.

It localises to the cytoplasm. The catalysed reaction is AMP + ATP = 2 ADP. The protein operates within purine metabolism; AMP biosynthesis via salvage pathway; AMP from ADP: step 1/1. In terms of biological role, catalyzes the reversible transfer of the terminal phosphate group between ATP and AMP. Plays an important role in cellular energy homeostasis and in adenine nucleotide metabolism. In Chlamydia abortus (strain DSM 27085 / S26/3) (Chlamydophila abortus), this protein is Adenylate kinase.